The primary structure comprises 86 residues: EMBRYO SURROUNDING FACTOR 1-like protein 2 (86 aa).

A signal peptide spans 1-21 (MKSHIAIICIIMLSFFSMHEY). Disulfide bonds link cysteine 39/cysteine 54, cysteine 44/cysteine 82, cysteine 52/cysteine 78, and cysteine 55/cysteine 65.

It belongs to the MEG family.

This is EMBRYO SURROUNDING FACTOR 1-like protein 2 (ESFL2) from Arabidopsis thaliana (Mouse-ear cress).